The chain runs to 297 residues: Farnesyl diphosphate synthase (297 aa).

Isopentenyl diphosphate is bound by residues K47, R50, and H79. Positions 86 and 92 each coordinate Mg(2+). R97 is a binding site for (2E)-geranyl diphosphate. R98 provides a ligand contact to isopentenyl diphosphate. Positions 183, 184, 221, and 238 each coordinate (2E)-geranyl diphosphate.

This sequence belongs to the FPP/GGPP synthase family. Mg(2+) serves as cofactor.

Its subcellular location is the cytoplasm. It carries out the reaction isopentenyl diphosphate + (2E)-geranyl diphosphate = (2E,6E)-farnesyl diphosphate + diphosphate. This is Farnesyl diphosphate synthase from Geobacillus stearothermophilus (Bacillus stearothermophilus).